Consider the following 453-residue polypeptide: CBL-interacting protein kinase 24 (453 aa).

In terms of domain architecture, Protein kinase spans Y18–F271. ATP is bound by residues I24–V32 and K47. The active-site Proton acceptor is the D141. Residues D159–E186 form an activation loop region. Positions N310 to D336 constitute an NAF domain. Positions K343–V372 are PPI.

The protein belongs to the protein kinase superfamily. CAMK Ser/Thr protein kinase family. SNF1 subfamily. In terms of assembly, interacts with CBL4. Mn(2+) is required as a cofactor.

The catalysed reaction is L-seryl-[protein] + ATP = O-phospho-L-seryl-[protein] + ADP + H(+). It carries out the reaction L-threonyl-[protein] + ATP = O-phospho-L-threonyl-[protein] + ADP + H(+). Its function is as follows. Involved in the regulatory pathway for the control of intracellular Na(+) and K(+) homeostasis and salt tolerance. Operates in synergy with CBL4 to activate the plasma membrane Na(+)/H(+) antiporter SOS1. CIPK serine-threonine protein kinases interact with CBL proteins. Binding of a CBL protein to the regulatory NAF domain of CIPK protein lead to the activation of the kinase in a calcium-dependent manner. The polypeptide is CBL-interacting protein kinase 24 (CIPK24) (Oryza sativa subsp. japonica (Rice)).